The primary structure comprises 424 residues: MDKFRVYGQSRLSGSVNISGAKNAALPILFAAILATEPVKLTNVPELKDIETTLKILRQLGVVVDRDATGAVLLDASNINHFTAPYELVKTMRASIWALAPLVARFHQGQVSLPGGCSIGARPVDLHISGLEKLGADIVLEEGYVKAQVSDRLVGTRIVIEKVSVGATLSIMMAATLAKGTTVIENAAREPEIVDTADFLNKMGAKITGAGSAHITIEGVERLTGCEHSVVPDRIETGTFLIAAAISGGCVVCQNTKADTLDAVIDKLREAGAQVDVTENSITLDMLGNRPKAVNIRTAPHPGFPTDMQAQFTLLNMVAEGTSIITETIFENRFMHIPELIRMGGKAEIEGNTAVCHGVEQLSGTEVIATDLRASISLVLAGCIATGETIVDRIYHIDRGYEHIEDKLRGLGAKIERFSGSDEA.

Phosphoenolpyruvate is bound at residue 22–23 (KN). Arg-93 serves as a coordination point for UDP-N-acetyl-alpha-D-glucosamine. Residue Cys-117 is the Proton donor of the active site. Cys-117 bears the 2-(S-cysteinyl)pyruvic acid O-phosphothioketal mark. UDP-N-acetyl-alpha-D-glucosamine is bound by residues 122–126 (RPVDL), 164–166 (SVG), Asp-307, and Ile-329.

The protein belongs to the EPSP synthase family. MurA subfamily.

Its subcellular location is the cytoplasm. The catalysed reaction is phosphoenolpyruvate + UDP-N-acetyl-alpha-D-glucosamine = UDP-N-acetyl-3-O-(1-carboxyvinyl)-alpha-D-glucosamine + phosphate. The protein operates within cell wall biogenesis; peptidoglycan biosynthesis. Functionally, cell wall formation. Adds enolpyruvyl to UDP-N-acetylglucosamine. The polypeptide is UDP-N-acetylglucosamine 1-carboxyvinyltransferase (Haemophilus influenzae (strain ATCC 51907 / DSM 11121 / KW20 / Rd)).